Reading from the N-terminus, the 56-residue chain is Large ribosomal subunit protein uL30 (56 aa).

Belongs to the universal ribosomal protein uL30 family. In terms of assembly, part of the 50S ribosomal subunit.

The sequence is that of Large ribosomal subunit protein uL30 from Nitratidesulfovibrio vulgaris (strain ATCC 29579 / DSM 644 / CCUG 34227 / NCIMB 8303 / VKM B-1760 / Hildenborough) (Desulfovibrio vulgaris).